Here is a 755-residue protein sequence, read N- to C-terminus: Xaa-Pro dipeptidyl-peptidase (755 aa).

Active-site charge relay system residues include S348, D468, and H498.

Belongs to the peptidase S15 family. As to quaternary structure, homodimer.

Its subcellular location is the cytoplasm. The catalysed reaction is Hydrolyzes Xaa-Pro-|- bonds to release unblocked, N-terminal dipeptides from substrates including Ala-Pro-|-p-nitroanilide and (sequentially) Tyr-Pro-|-Phe-Pro-|-Gly-Pro-|-Ile.. Its function is as follows. Removes N-terminal dipeptides sequentially from polypeptides having unsubstituted N-termini provided that the penultimate residue is proline. The polypeptide is Xaa-Pro dipeptidyl-peptidase (Streptococcus thermophilus (strain ATCC BAA-491 / LMD-9)).